Reading from the N-terminus, the 428-residue chain is Trigger factor (428 aa).

The region spanning 163 to 248 (GDTAVIDFEG…VHEIKEKRLP (86 aa)) is the PPIase FKBP-type domain.

Belongs to the FKBP-type PPIase family. Tig subfamily.

The protein localises to the cytoplasm. The catalysed reaction is [protein]-peptidylproline (omega=180) = [protein]-peptidylproline (omega=0). In terms of biological role, involved in protein export. Acts as a chaperone by maintaining the newly synthesized protein in an open conformation. Functions as a peptidyl-prolyl cis-trans isomerase. The chain is Trigger factor from Geobacillus sp. (strain WCH70).